The following is a 347-amino-acid chain: LRP2-binding protein (347 aa).

The TPR repeat unit spans residues 59–92; that stretch reads TLAYFLRGQLYFEEGWYEEALEQFEEIKEKDHQA. 6 Sel1-like repeats span residues 93-125, 133-168, 173-206, 207-242, 243-277, and 297-332; these read TYQLGVMYYDGLGTTLDAEKGVDYMKKILDSPC, FAAAYNLGRAYYEGKGVKRSNEEAERLWLIAADNGN, VKAQSMLGLYYSTKEPKELEKAFYWHSEACGNGN, LESQGALGLMYLYGQGIRQDTEAALQCLREAAERGN, VYAQGNLVEYYYKMKFFTKCVAFSKRIADYDEVHD, and AMASFYHARCLQLGLGITRDETTAKHYYSKACRLNP.

Interacts with LRP2.

The protein resides in the cytoplasm. Functionally, may act as an adapter that regulates LRP2 function. In Homo sapiens (Human), this protein is LRP2-binding protein (LRP2BP).